The primary structure comprises 212 residues: NAD(P)H-hydrate epimerase (212 aa).

Positions 11–212 (MRHYDFYTIN…ANDMGTYAVD (202 aa)) constitute a YjeF N-terminal domain. 60 to 64 (NNGGD) is a binding site for (6S)-NADPHX. Residues Asn-61 and Asp-123 each contribute to the K(+) site. (6S)-NADPHX contacts are provided by residues 127–133 (GIGIDRA), Tyr-138, and Asp-156. Ser-159 lines the K(+) pocket.

This sequence belongs to the NnrE/AIBP family. It depends on K(+) as a cofactor.

It catalyses the reaction (6R)-NADHX = (6S)-NADHX. It carries out the reaction (6R)-NADPHX = (6S)-NADPHX. Functionally, catalyzes the epimerization of the S- and R-forms of NAD(P)HX, a damaged form of NAD(P)H that is a result of enzymatic or heat-dependent hydration. This is a prerequisite for the S-specific NAD(P)H-hydrate dehydratase to allow the repair of both epimers of NAD(P)HX. This chain is NAD(P)H-hydrate epimerase, found in Limosilactobacillus reuteri (strain DSM 20016) (Lactobacillus reuteri).